Consider the following 382-residue polypeptide: Mannitol-1-phosphate 5-dehydrogenase (382 aa).

3-14 (ALHFGAGNIGRG) provides a ligand contact to NAD(+). Lys269 is subject to N6-acetyllysine.

Belongs to the mannitol dehydrogenase family.

The catalysed reaction is D-mannitol 1-phosphate + NAD(+) = beta-D-fructose 6-phosphate + NADH + H(+). This chain is Mannitol-1-phosphate 5-dehydrogenase, found in Escherichia coli O9:H4 (strain HS).